A 485-amino-acid chain; its full sequence is MTITPQNLIALLPLLIVGLTVVVVMLSIAWRRNHFLNATLSVIGLNAALVSLWFVGQAGAMDVTPLMRVDGFAMLYTGLVLLASLATCTFAYPWLEGYNDNKDEFYLLVLIAALGGILLANANHLASLFLGIELISLPLFGLVGYAFRQKRSLEASIKYTILSAAASSFLLFGMALVYAQSGDLSFVALGKNLGDGMLNEPLLLAGFGLMIVGLGFKLSLVPFHLWTPDVYQGAPAPVSTFLATASKIAIFGVVMRLFLYAPVGDSEAIRVVLAIIAFASIIFGNLMALSQTNIKRLLGYSSISHLGYLLVALIALQTGEMSMEAVGVYLVGYLFSSLGAFGVVSLMSSPYRGPDADSLFSYRGLFWHRPILAAVMTVMMLSLAGIPMTLGFIGKFYVLAVGVQAHLWWLVGAVVVGSAIGLYYYLRVAVSLYLHAPEQPGRDAPSNWQYSAGGIVVLISALLVLVLGVWPQPLISIVRLAMPLM.

Helical transmembrane passes span 8–28 (LIALLPLLIVGLTVVVVMLSI), 35–55 (FLNATLSVIGLNAALVSLWFV), 71–91 (GFAMLYTGLVLLASLATCTFA), 105–125 (FYLLVLIAALGGILLANANHL), 127–147 (SLFLGIELISLPLFGLVGYAF), 159–179 (YTILSAAASSFLLFGMALVYA), 203–223 (LLAGFGLMIVGLGFKLSLVPF), 235–255 (PAPVSTFLATASKIAIFGVVM), 271–291 (VVLAIIAFASIIFGNLMALSQ), 297–317 (LLGYSSISHLGYLLVALIALQ), 326–346 (VGVYLVGYLFSSLGAFGVVSL), 373–393 (AAVMTVMMLSLAGIPMTLGFI), 408–430 (WWLVGAVVVGSAIGLYYYLRVAV), and 455–475 (IVVLISALLVLVLGVWPQPLI).

Belongs to the complex I subunit 2 family. As to quaternary structure, NDH-1 is composed of 13 different subunits. Subunits NuoA, H, J, K, L, M, N constitute the membrane sector of the complex.

The protein resides in the cell inner membrane. The enzyme catalyses a quinone + NADH + 5 H(+)(in) = a quinol + NAD(+) + 4 H(+)(out). Its function is as follows. NDH-1 shuttles electrons from NADH, via FMN and iron-sulfur (Fe-S) centers, to quinones in the respiratory chain. The immediate electron acceptor for the enzyme in this species is believed to be ubiquinone. Couples the redox reaction to proton translocation (for every two electrons transferred, four hydrogen ions are translocated across the cytoplasmic membrane), and thus conserves the redox energy in a proton gradient. This Escherichia coli O1:K1 / APEC protein is NADH-quinone oxidoreductase subunit N.